The primary structure comprises 148 residues: UPF0540 protein At1g62000 (148 aa).

The signal sequence occupies residues M1 to A21. The span at R123–S132 shows a compositional bias: low complexity. Residues R123 to D148 form a disordered region.

Belongs to the UPF0540 family.

The polypeptide is UPF0540 protein At1g62000 (Arabidopsis thaliana (Mouse-ear cress)).